Reading from the N-terminus, the 396-residue chain is tRNA (guanine-N(7)-)-methyltransferase (396 aa).

The S-adenosyl-L-methionine site is built by glutamate 125, glutamate 150, and aspartate 177. Substrate contacts are provided by lysine 203 and aspartate 233.

Belongs to the class I-like SAM-binding methyltransferase superfamily. TrmB family.

It catalyses the reaction guanosine(46) in tRNA + S-adenosyl-L-methionine = N(7)-methylguanosine(46) in tRNA + S-adenosyl-L-homocysteine. Its pathway is tRNA modification; N(7)-methylguanine-tRNA biosynthesis. Its function is as follows. Catalyzes the formation of N(7)-methylguanine at position 46 (m7G46) in tRNA. In Helicobacter hepaticus (strain ATCC 51449 / 3B1), this protein is tRNA (guanine-N(7)-)-methyltransferase.